Reading from the N-terminus, the 438-residue chain is Aspartate--tRNA(Asp/Asn) ligase (438 aa).

L-aspartate is bound at residue Glu176. Residues 198 to 201 (QLYK) form an aspartate region. Residue Arg220 participates in L-aspartate binding. ATP-binding positions include 220–222 (RAE), 228–230 (RHL), and Glu361. Mg(2+) contacts are provided by Glu361 and Ser364. Residues Ser364 and Arg368 each contribute to the L-aspartate site. 409–412 (GIER) provides a ligand contact to ATP.

Belongs to the class-II aminoacyl-tRNA synthetase family. Type 2 subfamily. In terms of assembly, homodimer. Mg(2+) is required as a cofactor.

The protein resides in the cytoplasm. It carries out the reaction tRNA(Asx) + L-aspartate + ATP = L-aspartyl-tRNA(Asx) + AMP + diphosphate. In terms of biological role, aspartyl-tRNA synthetase with relaxed tRNA specificity since it is able to aspartylate not only its cognate tRNA(Asp) but also tRNA(Asn). Reaction proceeds in two steps: L-aspartate is first activated by ATP to form Asp-AMP and then transferred to the acceptor end of tRNA(Asp/Asn). The sequence is that of Aspartate--tRNA(Asp/Asn) ligase from Methanococcus aeolicus (strain ATCC BAA-1280 / DSM 17508 / OCM 812 / Nankai-3).